Consider the following 160-residue polypeptide: D-aminoacyl-tRNA deacylase (160 aa).

Positions 146–147 (GP) match the Gly-cisPro motif, important for rejection of L-amino acids motif.

Belongs to the DTD family. As to quaternary structure, homodimer.

The protein resides in the cytoplasm. The catalysed reaction is glycyl-tRNA(Ala) + H2O = tRNA(Ala) + glycine + H(+). It catalyses the reaction a D-aminoacyl-tRNA + H2O = a tRNA + a D-alpha-amino acid + H(+). Its function is as follows. An aminoacyl-tRNA editing enzyme that deacylates mischarged D-aminoacyl-tRNAs. Also deacylates mischarged glycyl-tRNA(Ala), protecting cells against glycine mischarging by AlaRS. Acts via tRNA-based rather than protein-based catalysis; rejects L-amino acids rather than detecting D-amino acids in the active site. By recycling D-aminoacyl-tRNA to D-amino acids and free tRNA molecules, this enzyme counteracts the toxicity associated with the formation of D-aminoacyl-tRNA entities in vivo and helps enforce protein L-homochirality. The sequence is that of D-aminoacyl-tRNA deacylase from Desulfovibrio desulfuricans (strain ATCC 27774 / DSM 6949 / MB).